The chain runs to 277 residues: Sarcosine/dimethylglycine N-methyltransferase (277 aa).

Belongs to the methyltransferase superfamily. In terms of assembly, monomer.

It carries out the reaction sarcosine + 2 S-adenosyl-L-methionine = glycine betaine + 2 S-adenosyl-L-homocysteine + 2 H(+). The enzyme catalyses sarcosine + S-adenosyl-L-methionine = N,N-dimethylglycine + S-adenosyl-L-homocysteine + H(+). The catalysed reaction is N,N-dimethylglycine + S-adenosyl-L-methionine = glycine betaine + S-adenosyl-L-homocysteine + H(+). The protein operates within amine and polyamine biosynthesis; betaine biosynthesis via glycine pathway; betaine from glycine: step 2/3. Its pathway is amine and polyamine biosynthesis; betaine biosynthesis via glycine pathway; betaine from glycine: step 3/3. Inhibited by n-butylic acid and S-adenosyl-L-homocysteine. Its function is as follows. Catalyzes the methylation of sarcosine and dimethylglycine to dimethylglycine and betaine, respectively, with S-adenosylmethionine (AdoMet) acting as the methyl donor. Activity with sarcosine is much weaker than activity with dimethylglycine. This is Sarcosine/dimethylglycine N-methyltransferase from Aphanothece halophytica.